A 407-amino-acid polypeptide reads, in one-letter code: Multidrug resistance protein MdtH (407 aa).

Helical transmembrane passes span 13-33 (CFLI…FPLI), 88-108 (LGFI…SCML), 139-159 (VLML…TWLL), 163-183 (FKLV…FNAW), 210-230 (FVIY…VMLM), 247-267 (WMYI…TWWS), 277-297 (LMVG…VKNL), 298-318 (HTLL…EPAR), 340-360 (LSLA…YDIG), and 368-388 (LPWI…YCQF).

This sequence belongs to the major facilitator superfamily. DHA1 family. MdtH (TC 2.A.1.2.21) subfamily.

The protein resides in the cell inner membrane. The sequence is that of Multidrug resistance protein MdtH from Blochmanniella pennsylvanica (strain BPEN).